The following is a 430-amino-acid chain: Putative golgin subfamily A member 8D (430 aa).

Residues 2-217 (EWKLEQSMRE…LTAQLSLMAL (216 aa)) are a coiled coil. Disordered stretches follow at residues 138–158 (LREQ…QEER), 217–239 (LPGE…RPMP), 290–331 (PITK…GVAA), and 382–406 (PVQG…QDHQ). Residues 222-235 (HGGEHLDSEGEEAP) show a composition bias toward basic and acidic residues. Over residues 303–316 (PGGGHHQAGPGQGG) the composition is skewed to gly residues.

This sequence belongs to the GOLGA8 family.

The protein is Putative golgin subfamily A member 8D (GOLGA8DP) of Homo sapiens (Human).